Here is an 87-residue protein sequence, read N- to C-terminus: Spermatid-specific protein S1 (87 aa).

The disordered stretch occupies residues 1–36; sequence TKSRYRNRRSRPRRRYGRRMRKTRCRRKGRRISRRP.

It is found in the nucleus. Its subcellular location is the chromosome. In terms of biological role, involved in nuclear basic protein transition: histones are replaced by spermatid specific proteins which are themselves replaced by protamines in late spermatids. The chain is Spermatid-specific protein S1 from Scyliorhinus canicula (Small-spotted catshark).